A 1505-amino-acid polypeptide reads, in one-letter code: ABC transporter C family member 13 (1505 aa).

Transmembrane regions (helical) follow at residues 11–31 (EAAA…LLLL), 54–68 (AVDG…VGAW), 71–91 (AALA…SYEV), 102–122 (ALLL…LAMQ), 131–151 (FPVL…GIAY), 171–191 (MVAN…GVMG), 313–333 (AFAA…SYFV), 336–356 (LSGK…FFVA), 367–387 (WYLG…AMVY), 421–441 (AWYF…LAIL), 447–467 (IAMV…VPVA), and 534–554 (FVFW…CILL). The 276-residue stretch at 314-589 (FAAVNTIVSY…FPDLISMIAQ (276 aa)) folds into the ABC transmembrane type-1 1 domain. An ABC transporter 1 domain is found at 623–846 (ININDATFSW…GTDFNALVCA (224 aa)). 658-665 (GVIGSGKS) provides a ligand contact to ATP. Polar residues predominate over residues 881 to 897 (DNLKNKVSNNEKPSSTR). The disordered stretch occupies residues 881–919 (DNLKNKVSNNEKPSSTRGIKEKKKKPEERKKKRSVQEEE). Over residues 904–919 (KKPEERKKKRSVQEEE) the composition is skewed to basic and acidic residues. The next 6 membrane-spanning stretches (helical) occupy residues 940 to 960 (GTLI…QIAS), 980 to 1000 (SVVL…FVFV), 1055 to 1077 (IAFR…AVMS), 1081 to 1103 (WQVL…YYIA), 1149 to 1169 (LLDC…WLCL), and 1174 to 1194 (LSTF…PGTI). The 271-residue stretch at 945–1215 (LIILAQTMFQ…GLNLNARMSR (271 aa)) folds into the ABC transmembrane type-1 2 domain. The ABC transporter 2 domain occupies 1262 to 1496 (IELVDLKVRY…KSSMFMQLVS (235 aa)). 1296–1303 (GRTGSGKS) contacts ATP.

This sequence belongs to the ABC transporter superfamily. ABCC family. Conjugate transporter (TC 3.A.1.208) subfamily.

It is found in the membrane. In terms of biological role, ABC transporter that may affect phytic acid transport and compartmentalization. May function directly or indirectly in removing phytic acid from the cytosol or in vesicle trafficking. Required for phytic acid accumulation in developing seeds. Phytic acid is the primary storage form of phosphorus in cereal grains and other plant seeds. The protein is ABC transporter C family member 13 of Oryza sativa subsp. indica (Rice).